The chain runs to 1135 residues: MDPGSRWRNLPSGPSLKHLTDPSYGIPREQQKAALQELTRAHVESFNYAVHEGLGLAVQAIPPFEFAFKDERISFTILDAVISPPTVPKGTICKEANVYPAECRGRRSTYRGKLTADINWAVNGISKGIIKQFLGYVPIMVKSKLCNLRNLPPQALIEHHEEAEEMGGYFIINGIEKVIRMLIMPRRNFPIAMIRPKWKTRGPGYTQYGVSMHCVREEHSAVNMNLHYLENGTVMLNFIYRKELFFLPLGFALKALVSFSDYQIFQELIKGKEDDSFLRNSVSQMLRIVMEEGCSTQKQVLNYLGECFRVKLNVPDWYPNEQAAEFLFNQCICIHLKSNTEKFYMLCLMTRKLFALAKGECMEDNPDSLVNQEVLTPGQLFLMFLKEKLEGWLVSIKIAFDKKAQKTSVSMNTDNLMRIFTMGIDLTKPFEYLFATGNLRSKTGLGLLQDSGLCVVADKLNFIRYLSHFRCVHRGADFAKMRTTTVRRLLPESWGFLCPVHTPDGEPCGLMNHLTAVCEVVTQFVYTASIPALLCNLGVTPIDGAPHRSYSECYPVLLDGVMVGWVDKDLAPGIADSLRHFKVLREKRIPPWMEVVLIPMTGKPSLYPGLFLFTTPCRLVRPVQNLALGKEELIGTMEQIFMNVAIFEDEVFAGVTTHQELFPHSLLSVIANFIPFSDHNQSPRNMYQCQMGKQTMGFPLLTYQDRSDNKLYRLQTPQSPLVRPSMYDYYDMDNYPIGTNAIVAVISYTGYDMEDAMIVNKASWERGFAHGSVYKSEFIDLSEKIKQGDSSLVFGIKPGDPRVLQKLDDDGLPFIGAKLQYGDPYYSYLNLNTGESFVMYYKSKENCVVDNIKVCSNDTGSGKFKCVCITMRVPRNPTIGDKFASRHGQKGILSRLWPAEDMPFTESGMVPDILFNPHGFPSRMTIGMLIESMAGKSAALHGLCHDATPFIFSEENSALEYFGEMLKAAGYNFYGTERLYSGISGLELEADIFIGVVYYQRLRHMVSDKFQVRTTGARDRVTNQPIGGRNVQGGIRFGEMERDALLAHGTSFLLHDRLFNCSDRSVAHVCVKCGSLLSPLLEKPPPSWSAMRNRKYNCTLCSRSDTIDTVSVPYVFRYFVAELAAMNIKVKLDVV.

The interval 1-24 (MDPGSRWRNLPSGPSLKHLTDPSY) is disordered. An RNA-binding site is contributed by R180. The tract at residues 194–208 (IRPKWKTRGPGYTQY) is loop B. Positions 236-247 (LNFIYRKELFFL) are loop A. D367 contributes to the RNA binding site. 2 fork loop regions span residues 439-453 (LRSK…DSGL) and 474-489 (RGAD…VRRL). D755 is a binding site for Mg(2+). RNA is bound at residue K890. Positions 1020 and 1036 each coordinate DNA. S1051 is subject to Phosphoserine. Zn(2+)-binding residues include C1070, C1073, C1098, and C1101. Residues 1070 to 1101 (CVKCGSLLSPLLEKPPPSWSAMRNRKYNCTLC) form a C4-type zinc finger.

It belongs to the RNA polymerase beta chain family. Component of the RNA polymerase I (Pol I) complex consisting of 13 subunits: a ten-subunit catalytic core composed of POLR1A/RPA1, POLR1B/RPA2, POLR1C/RPAC1, POLR1D/RPAC2, POLR1H/RPA12, POLR2E/RPABC1, POLR2F/RPABC2, POLR2H/RPABC3, POLR2K/RPABC4 and POLR2L/RPABC5; a mobile stalk subunit POLR1F/RPA43 protruding from the core and additional subunits homologous to general transcription factors POLR1E/RPA49 and POLR1G/RPA34. Part of Pol I pre-initiation complex (PIC), in which Pol I core assembles with RRN3 and promoter-bound UTBF and SL1/TIF-IB complex. Mg(2+) serves as cofactor.

The protein localises to the nucleus. Its subcellular location is the nucleolus. The protein resides in the chromosome. The catalysed reaction is RNA(n) + a ribonucleoside 5'-triphosphate = RNA(n+1) + diphosphate. Catalytic core component of RNA polymerase I (Pol I), a DNA-dependent RNA polymerase which synthesizes ribosomal RNA precursors using the four ribonucleoside triphosphates as substrates. Transcribes 47S pre-rRNAs from multicopy rRNA gene clusters, giving rise to 5.8S, 18S and 28S ribosomal RNAs. Pol I-mediated transcription cycle proceeds through transcription initiation, transcription elongation and transcription termination stages. During transcription initiation, Pol I pre-initiation complex (PIC) is recruited by the selectivity factor 1 (SL1/TIF-IB) complex bound to the core promoter that precedes an rDNA repeat unit. The PIC assembly bends the promoter favoring the formation of the transcription bubble and promoter escape. Once the polymerase has escaped from the promoter it enters the elongation phase during which RNA is actively polymerized, based on complementarity with the template DNA strand. Highly processive, assembles in structures referred to as 'Miller trees' where many elongating Pol I complexes queue and transcribe the same rDNA coding regions. At terminator sequences downstream of the rDNA gene, PTRF interacts with Pol I and halts Pol I transcription leading to the release of the RNA transcript and polymerase from the DNA. Forms Pol I active center together with the largest subunit POLR1A/RPA1. Appends one nucleotide at a time to the 3' end of the nascent RNA, with POLR1A/RPA1 contributing a Mg(2+)-coordinating DxDGD motif, and POLR1B/RPA2 participating in the coordination of a second Mg(2+) ion and providing lysine residues believed to facilitate Watson-Crick base pairing between the incoming nucleotide and the template base. Typically, Mg(2+) ions direct a 5' nucleoside triphosphate to form a phosphodiester bond with the 3' hydroxyl of the preceding nucleotide of the nascent RNA, with the elimination of pyrophosphate. Has proofreading activity: Pauses and backtracks to allow the cleavage of a missincorporated nucleotide via POLR1H/RPA12. High Pol I processivity is associated with decreased transcription fidelity. This chain is DNA-directed RNA polymerase I subunit RPA2, found in Homo sapiens (Human).